A 72-amino-acid chain; its full sequence is Disintegrin sasaimin (72 aa).

Residues 1-72 form the Disintegrin domain; the sequence is EAGEECDCGA…SAGCPRNPFH (72 aa). Disulfide bonds link C6–C21, C8–C16, C15–C38, C29–C35, C34–C59, and C47–C66. The Cell attachment site signature appears at 51–53; it reads RGD.

This sequence belongs to the venom metalloproteinase (M12B) family. P-II subfamily. P-IIa sub-subfamily. In terms of assembly, monomer. Expressed by the venom gland.

It is found in the secreted. Functionally, inhibits ADP- (IC(50)=66 nM) and collagen-induced (IC(50)=100 nM) aggregation of human platelets. In vitro, inhibits adhesion of endothelial cells to vitronectin, type-I collagen and, to a lower degree, fibronectin and laminin. This chain is Disintegrin sasaimin, found in Cerrophidion sasai (Costa Rica montane pitviper).